Consider the following 842-residue polypeptide: Alanine--tRNA ligase (842 aa).

Zn(2+)-binding residues include histidine 549, histidine 553, cysteine 650, and histidine 654.

Belongs to the class-II aminoacyl-tRNA synthetase family. Zn(2+) serves as cofactor.

It localises to the cytoplasm. The enzyme catalyses tRNA(Ala) + L-alanine + ATP = L-alanyl-tRNA(Ala) + AMP + diphosphate. Functionally, catalyzes the attachment of alanine to tRNA(Ala) in a two-step reaction: alanine is first activated by ATP to form Ala-AMP and then transferred to the acceptor end of tRNA(Ala). Also edits incorrectly charged Ser-tRNA(Ala) and Gly-tRNA(Ala) via its editing domain. The polypeptide is Alanine--tRNA ligase (Campylobacter jejuni (strain RM1221)).